The primary structure comprises 165 residues: Phosphopantetheine adenylyltransferase (165 aa).

Ser-10 contributes to the substrate binding site. ATP-binding positions include 10-11 and His-18; that span reads SF. Substrate contacts are provided by Lys-42, Thr-79, and Arg-93. ATP is bound by residues 94-96, Glu-104, and 129-135; these read GLR and VRPITAT.

The protein belongs to the bacterial CoaD family. As to quaternary structure, homohexamer. The cofactor is Mg(2+).

The protein localises to the cytoplasm. It carries out the reaction (R)-4'-phosphopantetheine + ATP + H(+) = 3'-dephospho-CoA + diphosphate. It functions in the pathway cofactor biosynthesis; coenzyme A biosynthesis; CoA from (R)-pantothenate: step 4/5. Reversibly transfers an adenylyl group from ATP to 4'-phosphopantetheine, yielding dephospho-CoA (dPCoA) and pyrophosphate. This chain is Phosphopantetheine adenylyltransferase, found in Rhodopseudomonas palustris (strain BisA53).